The sequence spans 798 residues: Neuroligin-1 (798 aa).

The signal sequence occupies residues 1–17 (MERIYLLLLLFLPRIRS). The Extracellular segment spans residues 18 to 685 (YDVRSVTTSW…AAGSFTGKAL (668 aa)). Cysteine 86 and cysteine 125 are joined by a disulfide. N-linked (GlcNAc...) asparagine glycans are attached at residues asparagine 164, asparagine 292, and asparagine 315. Cysteine 288 and cysteine 307 are joined by a disulfide. The segment at 636 to 676 (ANLPFPPPPMPPSPPPELTTKPKPSESPTTLQTTTESEKAA) is disordered. Residues 639–652 (PFPPPPMPPSPPPE) show a composition bias toward pro residues. Residues 653–665 (LTTKPKPSESPTT) show a composition bias toward low complexity. Residues 686 to 706 (GGVIFIGCGFLIMNVCLLIAV) form a helical membrane-spanning segment. Over 707–798 (RREWGKKRRN…QAPTLEEIQV (92 aa)) the chain is Cytoplasmic. Residues 731-765 (HGGGAEQYNSLNSPEPLLSASHKNSTSMRPAGISP) form a disordered region.

The protein belongs to the type-B carboxylesterase/lipase family. Interacts (via extracellular domain) with isoform b of madd-4; the interaction is required for the localization to postsynaptic domains. Interacts with unc-49.

The protein resides in the cell membrane. It is found in the synapse. Functionally, probable neuronal cell surface protein thought to be involved in cell-cell-interactions by forming intercellular junctions through binding to beta-neurexins. Plays a role in the clustering of the GABA(A) receptor unc-49 at postsynaptic sites in neuromuscular junctions (NMJs) via the interaction with madd-4 and neurexin nrx-1 and is thereby required for normal GABAergic synaptic transmission. The sequence is that of Neuroligin-1 (nlg-1) from Caenorhabditis elegans.